The following is a 273-amino-acid chain: Phosphate import ATP-binding protein PstB (273 aa).

In terms of domain architecture, ABC transporter spans 19–258; it reads ISIQNVTISY…FNETEKIFNS (240 aa). 51–58 is an ATP binding site; the sequence is GPSGCGKS.

Belongs to the ABC transporter superfamily. Phosphate importer (TC 3.A.1.7) family. The complex is composed of two ATP-binding proteins (PstB), two transmembrane proteins (PstC and PstA) and a solute-binding protein (PstS).

The protein localises to the cell inner membrane. The catalysed reaction is phosphate(out) + ATP + H2O = ADP + 2 phosphate(in) + H(+). Part of the ABC transporter complex PstSACB involved in phosphate import. Responsible for energy coupling to the transport system. The sequence is that of Phosphate import ATP-binding protein PstB from Parasynechococcus marenigrum (strain WH8102).